Consider the following 492-residue polypeptide: Excitatory amino acid transporter (492 aa).

The Cytoplasmic portion of the chain corresponds to 1-7 (MVSWIRK). 3 helical membrane passes run 8–28 (NLLL…GFLL), 47–67 (LLMH…LISG), and 85–105 (TYYM…VLVI). Over 106-191 (HPGDPTIKKE…VKASVEYTSG (86 aa)) the chain is Extracellular. N-linked (GlcNAc...) asparagine glycosylation is found at N166 and N176. A run of 5 helical transmembrane segments spans residues 192–212 (MNVL…SQLG), 228–248 (VIMK…LCLI), 270–290 (VTVL…IFFV), 358–378 (AVAA…GQVV), and 389–409 (IGAA…LTAV).

This sequence belongs to the dicarboxylate/amino acid:cation symporter (DAACS) (TC 2.A.23) family.

It localises to the membrane. Its function is as follows. Transports L-glutamate and also L- and D-aspartate. Essential for terminating the postsynaptic action of glutamate by rapidly removing released glutamate from the synaptic cleft. Acts as a symport by cotransporting sodium. The chain is Excitatory amino acid transporter (GLT-1) from Onchocerca volvulus.